An 832-amino-acid chain; its full sequence is WD repeat-containing protein 75 (832 aa).

WD repeat units follow at residues 4-43 (QCQI…KVYS), 47-86 (EECI…KLWD), 90-131 (GILI…QLVS), 145-184 (KEIS…YYFK), 193-230 (LKAT…RLWR), 236-275 (KEYT…VQWP), 278-317 (SEEK…SIID), 323-361 (SGII…QFYS), 375-424 (QQEF…KLWE), 431-477 (SFVL…KVWM), 490-528 (SWLC…TVWE), 532-572 (WDLK…CCWN), and 577-614 (ALEW…FLFQ). Residues 764–798 (SQSTEESKEDEEMKSEHSEADSSDETEEMESQKRF) form a disordered region.

As to quaternary structure, component of the proposed t-UTP subcomplex of the ribosomal small subunit (SSU) processome. SSU processome is composed of more than 70 proteins and the RNA chaperone small nucleolar RNA (snoRNA) U3.

Its subcellular location is the nucleus. The protein resides in the nucleolus. Ribosome biogenesis factor. Part of the small subunit (SSU) processome, first precursor of the small eukaryotic ribosomal subunit. During the assembly of the SSU processome in the nucleolus, many ribosome biogenesis factors, an RNA chaperone and ribosomal proteins associate with the nascent pre-rRNA and work in concert to generate RNA folding, modifications, rearrangements and cleavage as well as targeted degradation of pre-ribosomal RNA by the RNA exosome. Involved in nucleolar processing of pre-18S ribosomal RNA. Required for optimal pre-ribosomal RNA transcription by RNA polymerase I. The chain is WD repeat-containing protein 75 (wdr75) from Xenopus laevis (African clawed frog).